The chain runs to 520 residues: Glucose-6-phosphate isomerase (520 aa).

Catalysis depends on Glu327, which acts as the Proton donor. Residues His358 and Lys486 contribute to the active site.

This sequence belongs to the GPI family.

The protein localises to the cytoplasm. It carries out the reaction alpha-D-glucose 6-phosphate = beta-D-fructose 6-phosphate. The protein operates within carbohydrate biosynthesis; gluconeogenesis. Its pathway is carbohydrate degradation; glycolysis; D-glyceraldehyde 3-phosphate and glycerone phosphate from D-glucose: step 2/4. Catalyzes the reversible isomerization of glucose-6-phosphate to fructose-6-phosphate. This is Glucose-6-phosphate isomerase from Bordetella avium (strain 197N).